A 234-amino-acid chain; its full sequence is Uracil-DNA glycosylase (234 aa).

Asp-68 (proton acceptor) is an active-site residue.

This sequence belongs to the uracil-DNA glycosylase (UDG) superfamily. UNG family.

It localises to the cytoplasm. It catalyses the reaction Hydrolyzes single-stranded DNA or mismatched double-stranded DNA and polynucleotides, releasing free uracil.. In terms of biological role, excises uracil residues from the DNA which can arise as a result of misincorporation of dUMP residues by DNA polymerase or due to deamination of cytosine. The polypeptide is Uracil-DNA glycosylase (Ruegeria sp. (strain TM1040) (Silicibacter sp.)).